A 367-amino-acid chain; its full sequence is Transcription factor aptf-2 (367 aa).

The segment at 29–49 is disordered; the sequence is VPATKETGPSSSAECSTQPAV. Residues 36-47 show a composition bias toward polar residues; the sequence is GPSSSAECSTQP. The tract at residues 220–354 is H-S-H (helix-span-helix), dimerization; sequence AKQKAFPNKV…GVASELRRLT (135 aa).

This sequence belongs to the AP-2 family. Binds DNA as a dimer.

The protein resides in the nucleus. Its subcellular location is the cytoplasm. Functionally, sequence-specific DNA-binding protein that interacts with enhancer elements to regulate transcription of selected genes. Required for neuroblast and epidermal morphogenesis, perhaps acting in cooperation with transcription factor aptf-4. This is Transcription factor aptf-2 from Caenorhabditis elegans.